A 618-amino-acid chain; its full sequence is Chaperone protein DnaK (618 aa).

Threonine 175 is modified (phosphothreonine; by autocatalysis). Residues 579 to 618 are disordered; it reads GAPGAEGFDSNMAGEANAGQNANNDDNVVDADYKVEDDEK. Positions 591-604 are enriched in low complexity; that stretch reads AGEANAGQNANNDD.

This sequence belongs to the heat shock protein 70 family.

Acts as a chaperone. In Clostridium tetani (strain Massachusetts / E88), this protein is Chaperone protein DnaK.